A 1877-amino-acid chain; its full sequence is Neuron navigator 1 (1877 aa).

At Met-1 the chain carries N-acetylmethionine. Residues 1–59 form a disordered region; that stretch reads MLGSSVKSVQPEVELSSGGGDEGADEPRGAGRKAAAADGRGMLPKRAKAPGGGGGMAKA. Over residues 32–41 the composition is skewed to low complexity; that stretch reads RKAAAADGRG. 3 positions are modified to phosphoserine: Ser-90, Ser-142, and Ser-152. Residues 114 to 225 form a disordered region; sequence DMAKAPKGLG…PVPSAKGQEE (112 aa). Residue Thr-159 is modified to Phosphothreonine. Phosphoserine is present on residues Ser-194 and Ser-199. Residues 205–214 are compositionally biased toward low complexity; it reads SSKAKAQKSS. Residues 255–280 adopt a coiled-coil conformation; it reads ESQRKRTVQNVLDLRQNLEETMSSLR. A disordered region spans residues 294 to 336; sequence YDSDDANPRSVSSLSNRSSPLSWRYGQSSPRLQAGDAPSVGGS. A phosphoserine mark is found at Ser-296, Ser-308, Ser-312, Ser-362, and Ser-391. The span at 301–315 shows a compositional bias: low complexity; the sequence is PRSVSSLSNRSSPLS. Disordered stretches follow at residues 386–839 and 892–989; these read KSGY…PLPS and MSLP…PMSL. 2 stretches are compositionally biased toward low complexity: residues 411–425 and 433–448; these read DESSSISSGLSDASD and NASSSLNSLPSTPTAS. Ser-452, Ser-474, Ser-476, and Ser-490 each carry phosphoserine. Residues 476–486 are compositionally biased toward basic and acidic residues; the sequence is SEEKAPKKLEY. A compositionally biased stretch (basic and acidic residues) spans 503–519; it reads ERPESCDDSSKGGELKK. Ser-528 is modified (phosphoserine). Phosphothreonine is present on Thr-534. Residue Ser-541 is modified to Phosphoserine. A Phosphothreonine modification is found at Thr-544. The span at 555–566 shows a compositional bias: basic and acidic residues; the sequence is GKPEGKATDKGK. Position 572 is a phosphothreonine (Thr-572). A compositionally biased stretch (basic and acidic residues) spans 581-591; the sequence is AGRDRLSDAKK. Composition is skewed to polar residues over residues 615–635 and 645–655; these read GTATVMQTGGSATLSKIQKSS and RKTSLDVSNSA. A Phosphoserine modification is found at Ser-648. Residue Arg-688 is modified to Omega-N-methylarginine. Composition is skewed to polar residues over residues 698 to 710 and 724 to 733; these read IDPSLLSTKQGGL and GRTTPAPVNQ. Positions 731–756 form a coiled coil; that stretch reads VNQTDREKEKAKAKAVALDSDNISLK. Phosphoserine occurs at positions 750, 754, 760, 797, and 808. The segment covering 751–773 has biased composition (polar residues); the sequence is DNISLKSIGSPESTPKNQASHPT. Over residues 805-818 the composition is skewed to low complexity; that stretch reads NSNSLDLPSSSDTT. A compositionally biased stretch (pro residues) spans 902-913; sequence TPVPTPPAPPAA. The residue at position 1000 (Ser-1000) is a Phosphoserine. Position 1006 is a phosphothreonine (Thr-1006). Residues 1072 to 1163 are a coiled coil; that stretch reads SSAEERMQSE…SEAQAVIQGA (92 aa). At Thr-1170 the chain carries Phosphothreonine. Disordered stretches follow at residues 1172–1204, 1244–1306, 1359–1383, and 1810–1843; these read KELRIKRQNSSDSISSLNSITSHSSIGSSKDAD, ATPD…EKKE, LKVAPGPSSGSTPGQVPGSSALSSP, and KLYHLPPPTVGPHSIASPPEDRTVKDSTPSSLDS. Ser-1181 is subject to Phosphoserine. Low complexity predominate over residues 1181–1200; sequence SSDSISSLNSITSHSSIGSS. Over residues 1246–1264 the composition is skewed to polar residues; the sequence is PDSSAPSSPKLQHGSTETA. Ser-1265 carries the post-translational modification Phosphoserine. A compositionally biased stretch (low complexity) spans 1265-1275; that stretch reads SPSIKSSTSSS. Residues 1303 to 1362 adopt a coiled-coil conformation; the sequence is EKKEVSELRSELWEKEMKLTDIRLEALNSAHQLDQLRETMHNMQLEVDLLKAENDRLKVA. A compositionally biased stretch (polar residues) spans 1366–1383; it reads SSGSTPGQVPGSSALSSP. A Phosphoserine modification is found at Ser-1382.

This sequence belongs to the Nav/unc-53 family. Interacts with tubulin. In terms of tissue distribution, broadly expressed at low levels. Expressed at high levels in heart, skeletal muscle and placenta.

It is found in the cytoplasm. The protein resides in the cytoskeleton. Its function is as follows. May be involved in neuronal migration. The polypeptide is Neuron navigator 1 (NAV1) (Homo sapiens (Human)).